The sequence spans 770 residues: uncharacterized protein (770 aa).

The first 24 residues, 1-24 (MVSAAWLRYPSLLTLGILVSRVAA), serve as a signal peptide directing secretion. Residues N78, N204, N533, and N638 are each glycosylated (N-linked (GlcNAc...) asparagine). Residues 746–770 (SWGTGQNDVPPSLGAGIKRDGLRFT) are disordered.

It belongs to the glycosyl hydrolase 92 family.

The protein localises to the secreted. This is an uncharacterized protein from Arthroderma benhamiae (strain ATCC MYA-4681 / CBS 112371) (Trichophyton mentagrophytes).